The primary structure comprises 300 residues: PTB domain-containing engulfment adapter protein 1 (300 aa).

The PID domain occupies 21–176 (AKHFIPYNAK…GGLQKRIQDL (156 aa)). A coiled-coil region spans residues 160-199 (VETRKQIGGLQKRIQDLETENVELKKQLQVLEEQLMIAQV).

The protein belongs to the ced-6 family.

The protein resides in the cytoplasm. In terms of biological role, may function as an adapter protein. Required for efficient phagocytosis of apoptotic cells. May play a role in the internalization and endosomal trafficking of various lrp1 ligands. The protein is PTB domain-containing engulfment adapter protein 1 (gulp1) of Danio rerio (Zebrafish).